Consider the following 24-residue polypeptide: Brevinin-1Ecb (24 aa).

Cysteines 18 and 24 form a disulfide.

In terms of tissue distribution, expressed by the skin glands.

The protein localises to the secreted. Its function is as follows. Shows antibacterial activity against representative Gram-negative and Gram-positive bacterial species, and hemolytic activity. The protein is Brevinin-1Ecb of Pelophylax ridibundus (Marsh frog).